The following is a 768-amino-acid chain: Solute carrier family 45 member 4 (768 aa).

Positions 1-32 (MKMAPQNADPESMQVQELSVPLPDPQKAGGAE) are disordered. The next 6 membrane-spanning stretches (helical) occupy residues 63 to 83 (EFCYAMETALVTPILLQIGLP), 86 to 106 (YYSLTWFLSPILGLIFTPLIG), 123 to 143 (ILALCVGVLFGVALFLNGSAI), 155 to 175 (PIGIVLTVLGVVVLDFSADAT), 196 to 216 (LNIHAFSAGLGGAIGYVLGGL), and 233 to 253 (VLFFFAAIIFTVSVALHLFSI). 2 disordered regions span residues 259-284 (SPQQERSAEEPGALDGGEPHGVPAFP) and 379-419 (NEAK…RHAF). Phosphoserine occurs at positions 424 and 454. Residues 460–489 (DMQKRQRQHRHRNQSGATTSSGDTESEEGE) form a disordered region. A compositionally biased stretch (low complexity) spans 473–482 (QSGATTSSGD). S485 bears the Phosphoserine mark. A run of 6 helical transmembrane segments spans residues 518–538 (TWFSVIAEAVFYTDFMGQVIF), 560–580 (MGCWGLVIYAATGAICSALLQ), 592–612 (VIYVLGTLGFSVGTAVMAMFP), 614–634 (VYVAMVTISTMGIVSMSISYC), 666–686 (ILSCQVYISQILVASALGGVV), and 695–715 (IPMVASVGSFLGFLTATFLVI). The segment at 726-768 (EQKGLSSPLAGEGRAGGNSEKPTVLKLTRKEGLQGPVETESVV) is disordered. S732 is subject to Phosphoserine.

This sequence belongs to the glycoside-pentoside-hexuronide (GPH) cation symporter transporter (TC 2.A.2) family.

It localises to the membrane. It catalyses the reaction sucrose(out) + H(+)(out) = sucrose(in) + H(+)(in). Its function is as follows. Proton-associated sucrose transporter. May be able to transport also glucose and fructose. The protein is Solute carrier family 45 member 4 of Homo sapiens (Human).